We begin with the raw amino-acid sequence, 166 residues long: Pyruvoyl-dependent arginine decarboxylase (166 aa).

A Pyruvic acid (Ser) modification is found at Ser45.

The protein belongs to the PdaD family. Pyruvate serves as cofactor.

It catalyses the reaction L-arginine + H(+) = agmatine + CO2. This Methanocella arvoryzae (strain DSM 22066 / NBRC 105507 / MRE50) protein is Pyruvoyl-dependent arginine decarboxylase.